A 130-amino-acid chain; its full sequence is Fluoride-specific ion channel FluC (130 aa).

4 helical membrane-spanning segments follow: residues 2–22, 35–55, 72–92, and 107–127; these read GLLL…RFAL, IGIL…AAFL, LFVT…LDIL, and ILVS…FIMG. Residues Gly79 and Thr82 each contribute to the Na(+) site.

It belongs to the fluoride channel Fluc/FEX (TC 1.A.43) family.

The protein resides in the cell inner membrane. The catalysed reaction is fluoride(in) = fluoride(out). With respect to regulation, na(+) is not transported, but it plays an essential structural role and its presence is essential for fluoride channel function. Fluoride-specific ion channel. Important for reducing fluoride concentration in the cell, thus reducing its toxicity. This Francisella philomiragia subsp. philomiragia (strain ATCC 25017 / CCUG 19701 / FSC 153 / O#319-036) protein is Fluoride-specific ion channel FluC.